A 345-amino-acid polypeptide reads, in one-letter code: Nuclear hormone receptor family nhr-176 (345 aa).

Positions 7-82 (IQPCLVCGQS…AGMLEKMVFS (76 aa)) form a DNA-binding region, nuclear receptor. The NR C4-type zinc finger occupies 10-30 (CLVCGQSSNSILFGAPSCRAC). Residues 46–65 (NNCLGECSFAKKSMKPCQSC) form an NR C4-type; degenerate zinc finger. Residues 92–342 (FEKSILEELE…CPLYAISTNS (251 aa)) form the NR LBD domain. Residues 331-342 (SGCPLYAISTNS) are AF-2.

The protein resides in the nucleus. Its function is as follows. Nuclear hormone receptor. Binds to xenobiotic ligand thiabendazole (TBZ), in vitro. Involved in the up-regulation of phase I detoxification genes, such as probable cytochrome P450 cyp-35d1, in response to TBZ. This Caenorhabditis elegans protein is Nuclear hormone receptor family nhr-176.